The sequence spans 512 residues: GMP synthase [glutamine-hydrolyzing] (512 aa).

Positions 3 to 196 (NILILDFGSQ…VKHICQASET (194 aa)) constitute a Glutamine amidotransferase type-1 domain. The Nucleophile role is filled by cysteine 80. Residues histidine 169 and glutamate 171 contribute to the active site. The GMPS ATP-PPase domain maps to 197 to 387 (WKIETIEKQL…LGLPDVLISR (191 aa)). Residue 225–231 (SGGVDSS) coordinates ATP.

Homodimer.

The catalysed reaction is XMP + L-glutamine + ATP + H2O = GMP + L-glutamate + AMP + diphosphate + 2 H(+). The protein operates within purine metabolism; GMP biosynthesis; GMP from XMP (L-Gln route): step 1/1. Catalyzes the synthesis of GMP from XMP. This chain is GMP synthase [glutamine-hydrolyzing], found in Chlamydia caviae (strain ATCC VR-813 / DSM 19441 / 03DC25 / GPIC) (Chlamydophila caviae).